A 119-amino-acid polypeptide reads, in one-letter code: Photosystem II extrinsic protein V (119 aa).

The heme c site is built by cysteine 36, cysteine 39, and histidine 40.

The protein belongs to the cytochrome c family. PsbV subfamily. PSII is composed of 1 copy each of membrane proteins PsbA, PsbB, PsbC, PsbD, PsbE, PsbF, PsbH, PsbI, PsbJ, PsbK, PsbL, PsbM, PsbT, PsbX, PsbY, PsbZ, Psb30/Ycf12, peripheral proteins PsbO, CyanoQ (PsbQ), PsbU, PsbV and a large number of cofactors. It forms dimeric complexes. Heme c is required as a cofactor.

The protein resides in the cellular thylakoid membrane. In terms of biological role, one of the extrinsic, lumenal subunits of photosystem II (PSII). PSII is a light-driven water plastoquinone oxidoreductase, using light energy to abstract electrons from H(2)O, generating a proton gradient subsequently used for ATP formation. The extrinsic proteins stabilize the structure of photosystem II oxygen-evolving complex (OEC), the ion environment of oxygen evolution and protect the OEC against heat-induced inactivation. Low-potential cytochrome c that plays a role in the OEC of PSII. The protein is Photosystem II extrinsic protein V (psbV) of Aphanizomenon flos-aquae.